Consider the following 438-residue polypeptide: ATP phosphoribosyltransferase regulatory subunit (438 aa).

It belongs to the class-II aminoacyl-tRNA synthetase family. HisZ subfamily. As to quaternary structure, heteromultimer composed of HisG and HisZ subunits.

The protein localises to the cytoplasm. It functions in the pathway amino-acid biosynthesis; L-histidine biosynthesis; L-histidine from 5-phospho-alpha-D-ribose 1-diphosphate: step 1/9. In terms of biological role, required for the first step of histidine biosynthesis. May allow the feedback regulation of ATP phosphoribosyltransferase activity by histidine. The polypeptide is ATP phosphoribosyltransferase regulatory subunit (Geobacter sulfurreducens (strain ATCC 51573 / DSM 12127 / PCA)).